A 161-amino-acid chain; its full sequence is uncharacterized protein (161 aa).

Residues Gly30–Phe50 traverse the membrane as a helical segment.

Its subcellular location is the membrane. This is an uncharacterized protein from Homo sapiens (Human).